A 108-amino-acid polypeptide reads, in one-letter code: Peptidyl-prolyl cis-trans isomerase FKBP1A (108 aa).

Residues 20 to 108 (GQTCVVHYTG…VFDVELLKLE (89 aa)) enclose the PPIase FKBP-type domain. K53 carries the N6-acetyllysine; alternate modification. At K53 the chain carries N6-succinyllysine; alternate.

It belongs to the FKBP-type PPIase family. FKBP1 subfamily. Interacts with TGFBR1; prevents TGFBR1 phosphorylation by TGFBR2 and stabilizes it in the inactive conformation. Interacts with ACVR1B and SMAD7. Identified in a complex composed of RYR1, PDE4D, PKA, FKBP1A and protein phosphatase 1 (PP1). Interacts directly with RYR2 and RYR3. Interacts with GLMN; rapamycin and FK506 abolish the interaction with GLMN in a dose dependent manner. Interacts directly with RYR1.

Its subcellular location is the cytoplasm. It localises to the cytosol. The protein localises to the sarcoplasmic reticulum membrane. It catalyses the reaction [protein]-peptidylproline (omega=180) = [protein]-peptidylproline (omega=0). Its activity is regulated as follows. Inhibited by both FK506 and rapamycin. Functionally, keeps in an inactive conformation TGFBR1, the TGF-beta type I serine/threonine kinase receptor, preventing TGF-beta receptor activation in absence of ligand. Recruits SMAD7 to ACVR1B which prevents the association of SMAD2 and SMAD3 with the activin receptor complex, thereby blocking the activin signal. May modulate the RYR1 calcium channel activity. PPIases accelerate the folding of proteins. It catalyzes the cis-trans isomerization of proline imidic peptide bonds in oligopeptides. The protein is Peptidyl-prolyl cis-trans isomerase FKBP1A (FKBP1A) of Homo sapiens (Human).